The primary structure comprises 67 residues: DNA-directed RNA polymerase subunit omega (67 aa).

The protein belongs to the RNA polymerase subunit omega family. As to quaternary structure, the RNAP catalytic core consists of 2 alpha, 1 beta, 1 beta' and 1 omega subunit. When a sigma factor is associated with the core the holoenzyme is formed, which can initiate transcription.

It catalyses the reaction RNA(n) + a ribonucleoside 5'-triphosphate = RNA(n+1) + diphosphate. Promotes RNA polymerase assembly. Latches the N- and C-terminal regions of the beta' subunit thereby facilitating its interaction with the beta and alpha subunits. The protein is DNA-directed RNA polymerase subunit omega of Paracidovorax citrulli (strain AAC00-1) (Acidovorax citrulli).